Consider the following 596-residue polypeptide: Chaperone protein DnaK (596 aa).

The residue at position 174 (Thr174) is a Phosphothreonine; by autocatalysis. The interval 576–596 (ANATKDQSSKDQEEVATVVEE) is disordered.

Belongs to the heat shock protein 70 family.

Functionally, acts as a chaperone. This is Chaperone protein DnaK from Mycoplasmopsis synoviae (strain 53) (Mycoplasma synoviae).